The sequence spans 142 residues: Extracellular globin-1 (142 aa).

The Globin domain maps to 1-142; the sequence is ECLVTEGLKV…DQIIDGIKDI (142 aa). Cysteines 2 and 131 form a disulfide. His-94 contributes to the heme b binding site.

The protein belongs to the globin family. As to quaternary structure, the extracellular hemoglobin of the earthworm consists of 12 subunits that have a hexagonal bilayer structure with a molecular weight near 3.8 million. Each one-twelfth subunit is composed primarily of disulfide linked trimers (chains A, B, and C) and monomers (chain D).

The polypeptide is Extracellular globin-1 (Lumbricus terrestris (Common earthworm)).